Consider the following 330-residue polypeptide: Ribosomal RNA small subunit methyltransferase C (330 aa).

Belongs to the methyltransferase superfamily. RsmC family. As to quaternary structure, monomer.

Its subcellular location is the cytoplasm. It carries out the reaction guanosine(1207) in 16S rRNA + S-adenosyl-L-methionine = N(2)-methylguanosine(1207) in 16S rRNA + S-adenosyl-L-homocysteine + H(+). Functionally, specifically methylates the guanine in position 1207 of 16S rRNA in the 30S particle. The sequence is that of Ribosomal RNA small subunit methyltransferase C from Haemophilus influenzae (strain PittEE).